The following is a 382-amino-acid chain: Beta-1,4-galactosyltransferase 6 (382 aa).

Residues 1 to 15 (MSALKRMMRVSNRSL) lie on the Cytoplasmic side of the membrane. A helical; Signal-anchor for type II membrane protein transmembrane segment spans residues 16–35 (IAFIFFFSLSTSCLYFIYVA). The Lumenal segment spans residues 36 to 382 (PGIANTYLFM…MPELAPVEDY (347 aa)). Asn71, Asn75, Asn83, Asn84, Asn99, and Asn122 each carry an N-linked (GlcNAc...) asparagine glycan. An intrachain disulfide couples Cys108 to Cys152. UDP-alpha-D-galactose is bound by residues 163-167 (PFRNR), 202-204 (FNR), 229-230 (VD), Tyr258, and Trp290. Cysteines 223 and 242 form a disulfide. Asp230 provides a ligand contact to Mn(2+). 292–295 (GEDD) lines the N-acetyl-D-glucosamine pocket. Asn307 carries N-linked (GlcNAc...) asparagine glycosylation. His323 provides a ligand contact to Mn(2+). 323 to 324 (HH) serves as a coordination point for UDP-alpha-D-galactose. Residue Arg334 coordinates N-acetyl-D-glucosamine. N-linked (GlcNAc...) asparagine glycosylation occurs at Asn367.

This sequence belongs to the glycosyltransferase 7 family. Mn(2+) serves as cofactor. It depends on Mg(2+) as a cofactor. Requires Ca(2+) as cofactor. As to expression, highest expression in brain with lower levels found in lungs, heart, skeletal muscle and kidney. Lowest expression in testis, liver and spleen.

The protein localises to the golgi apparatus. It localises to the golgi stack membrane. It catalyses the reaction a beta-D-glucosyl-(1&lt;-&gt;1')-N-acylsphing-4-enine + UDP-alpha-D-galactose = a beta-D-Gal-(1-&gt;4)-beta-D-Glc-(1&lt;-&gt;1)-Cer(d18:1(4E)) + UDP + H(+). It functions in the pathway protein modification; protein glycosylation. Its pathway is sphingolipid metabolism. Its activity is regulated as follows. Inhibited by EDTA. Functionally, catalyzes the synthesis of lactosylceramide (LacCer) via the transfer of galactose from UDP-galactose to glucosylceramide (GlcCer). LacCer is the starting point in the biosynthesis of all gangliosides (membrane-bound glycosphingolipids) which play pivotal roles in the CNS including neuronal maturation and axonal and myelin formation. This chain is Beta-1,4-galactosyltransferase 6, found in Rattus norvegicus (Rat).